Reading from the N-terminus, the 591-residue chain is CDK5RAP3 protein homolog (591 aa).

Low complexity predominate over residues 232–250 (RAGAPSSAKGPASSASAPP). 2 disordered regions span residues 232-252 (RAGA…PPAL) and 269-303 (TAPP…DAGG). Residues 279–303 (AGAGASGQGGGIEIDWGDSGGDAGG) show a composition bias toward gly residues. Short sequence motifs (shuffled ATG8-binding motif) lie at residues 311–314 (IDWD), 334–337 (INWD), and 369–372 (IDWD). The segment covering 386–401 (NNRAGDVAEGEAAASL) has biased composition (low complexity). Residues 386–416 (NNRAGDVAEGEAAASLSGGGGGGASSGDPDD) are disordered.

The protein belongs to the CDK5RAP3 family. Substrate adapter component of the UFM1 ribosome E3 ligase (UREL) complex. Interacts with ATG8 family proteins.

Its function is as follows. Substrate adapter of E3 ligase complexes mediating ufmylation, the covalent attachment of the ubiquitin-like modifier UFM1 to substrate proteins, and which is involved in various processes, such as ribosome recycling and reticulophagy (also called ER-phagy). This chain is CDK5RAP3 protein homolog, found in Chlamydomonas reinhardtii (Chlamydomonas smithii).